Reading from the N-terminus, the 241-residue chain is Demethylmenaquinone methyltransferase (241 aa).

S-adenosyl-L-methionine is bound by residues Thr60, Asp81, and Asp106–Ala107.

It belongs to the class I-like SAM-binding methyltransferase superfamily. MenG/UbiE family.

It carries out the reaction a 2-demethylmenaquinol + S-adenosyl-L-methionine = a menaquinol + S-adenosyl-L-homocysteine + H(+). It participates in quinol/quinone metabolism; menaquinone biosynthesis; menaquinol from 1,4-dihydroxy-2-naphthoate: step 2/2. Functionally, methyltransferase required for the conversion of demethylmenaquinol (DMKH2) to menaquinol (MKH2). This chain is Demethylmenaquinone methyltransferase, found in Staphylococcus aureus (strain MRSA252).